The following is a 128-amino-acid chain: Small ribosomal subunit protein bS6 (128 aa).

The protein belongs to the bacterial ribosomal protein bS6 family.

Binds together with bS18 to 16S ribosomal RNA. This chain is Small ribosomal subunit protein bS6, found in Acinetobacter baylyi (strain ATCC 33305 / BD413 / ADP1).